The sequence spans 397 residues: 1-deoxy-D-xylulose 5-phosphate reductoisomerase (397 aa).

Residues Thr12, Gly13, Ser14, Ile15, Gly38, Lys39, Asn40, and Asn126 each contribute to the NADPH site. Lys127 is a binding site for 1-deoxy-D-xylulose 5-phosphate. Glu128 provides a ligand contact to NADPH. Residue Asp152 coordinates Mn(2+). Positions 153, 154, 188, and 211 each coordinate 1-deoxy-D-xylulose 5-phosphate. Mn(2+) is bound at residue Glu154. An NADPH-binding site is contributed by Gly217. Ser224, Asn229, Lys230, and Glu233 together coordinate 1-deoxy-D-xylulose 5-phosphate. Glu233 is a Mn(2+) binding site.

This sequence belongs to the DXR family. Mg(2+) serves as cofactor. It depends on Mn(2+) as a cofactor.

The enzyme catalyses 2-C-methyl-D-erythritol 4-phosphate + NADP(+) = 1-deoxy-D-xylulose 5-phosphate + NADPH + H(+). The protein operates within isoprenoid biosynthesis; isopentenyl diphosphate biosynthesis via DXP pathway; isopentenyl diphosphate from 1-deoxy-D-xylulose 5-phosphate: step 1/6. Its function is as follows. Catalyzes the NADPH-dependent rearrangement and reduction of 1-deoxy-D-xylulose-5-phosphate (DXP) to 2-C-methyl-D-erythritol 4-phosphate (MEP). This chain is 1-deoxy-D-xylulose 5-phosphate reductoisomerase, found in Haemophilus influenzae (strain 86-028NP).